Consider the following 253-residue polypeptide: 5'-nucleotidase SurE (253 aa).

Residues Asp8, Asp9, Ser39, and Asn91 each contribute to the a divalent metal cation site.

This sequence belongs to the SurE nucleotidase family. Requires a divalent metal cation as cofactor.

The protein resides in the cytoplasm. The enzyme catalyses a ribonucleoside 5'-phosphate + H2O = a ribonucleoside + phosphate. Functionally, nucleotidase that shows phosphatase activity on nucleoside 5'-monophosphates. The protein is 5'-nucleotidase SurE of Leptothrix cholodnii (strain ATCC 51168 / LMG 8142 / SP-6) (Leptothrix discophora (strain SP-6)).